An 83-amino-acid chain; its full sequence is Probable calcium-binding protein CML29 (83 aa).

EF-hand domains follow at residues 5–40 (TEKA…LGSV) and 43–75 (DDVK…NRGL). Ca(2+) contacts are provided by D18, N20, D22, K24, E29, D53, D55, D57, N59, and E64.

In terms of biological role, potential calcium sensor. In Arabidopsis thaliana (Mouse-ear cress), this protein is Probable calcium-binding protein CML29 (CML29).